Consider the following 219-residue polypeptide: MKNDSAVVLFSGGQDSTTCLFWAKKHFKKVYALSFLYGQKHAHEVELARGIAERAGVEFHVMDTSFIGSLGSNSLTDTSISMDEDKPKDSFPNTFVPGRNLFFLSIAAVFAREQGAFHLVTGVSQTDYSGYPDCRDSFIKSLNVTLNLAMDEQFVIHTPLMWIDKAETWALADELGVFDLVRNETLTCYNGIPADGCGHCPACKLRKQGLEEYLSKRNR.

10–20 contributes to the ATP binding site; sequence FSGGQDSTTCL. Positions 188, 197, 200, and 203 each coordinate Zn(2+).

It belongs to the QueC family. The cofactor is Zn(2+).

The catalysed reaction is 7-carboxy-7-deazaguanine + NH4(+) + ATP = 7-cyano-7-deazaguanine + ADP + phosphate + H2O + H(+). It functions in the pathway purine metabolism; 7-cyano-7-deazaguanine biosynthesis. Functionally, catalyzes the ATP-dependent conversion of 7-carboxy-7-deazaguanine (CDG) to 7-cyano-7-deazaguanine (preQ(0)). The polypeptide is 7-cyano-7-deazaguanine synthase (Bacteroides fragilis (strain ATCC 25285 / DSM 2151 / CCUG 4856 / JCM 11019 / LMG 10263 / NCTC 9343 / Onslow / VPI 2553 / EN-2)).